The primary structure comprises 667 residues: Autophagy-related protein 20 (667 aa).

Positions 1–94 (MKQKKNRFGS…DESFKSTRAN (94 aa)) are disordered. Over residues 38–47 (SSSSRSSSTQ) the composition is skewed to low complexity. Over residues 55-67 (SLASVHTSDMHQS) the composition is skewed to polar residues. Residues 76–85 (DDNPFLDQDD) show a composition bias toward acidic residues. Positions 185–331 (KLINDRVQIL…DFLDPNNINW (147 aa)) constitute a PX domain. The a 1,2-diacyl-sn-glycero-3-phospho-(1D-myo-inositol-3-phosphate) site is built by arginine 222, serine 224, lysine 248, and arginine 297. The interval 524–562 (ELQRGVQPRNGNTASGASGNDESSVKKPQASKSQSSSYG) is disordered. Residues 532–545 (RNGNTASGASGNDE) show a composition bias toward polar residues. A compositionally biased stretch (low complexity) spans 549–560 (KKPQASKSQSSS). The stretch at 588 to 652 (QTTMANLIKE…SKYLKDYAKK (65 aa)) forms a coiled coil.

The protein belongs to the sorting nexin family.

The protein resides in the endosome membrane. Its subcellular location is the preautophagosomal structure membrane. Its function is as follows. Required for cytoplasm to vacuole transport (Cvt), pexophagy and mitophagy. Also involved in endoplasmic reticulum-specific autophagic process and is essential for the survival of cells subjected to severe ER stress. Functions in protein retrieval from the endocytic pathway. The sequence is that of Autophagy-related protein 20 (ATG20) from Vanderwaltozyma polyspora (strain ATCC 22028 / DSM 70294 / BCRC 21397 / CBS 2163 / NBRC 10782 / NRRL Y-8283 / UCD 57-17) (Kluyveromyces polysporus).